Consider the following 568-residue polypeptide: Kinetochore protein NDC80 homolog (568 aa).

Positions 1–59 are disordered; the sequence is MRGGAAGKRRTTVGFGGAPPPPPPSIEQQRHLFNSRDSDASFASSRPSSIGLGGRGASD. The segment covering 28-39 has biased composition (basic and acidic residues); that stretch reads QQRHLFNSRDSD. The segment covering 40-49 has biased composition (low complexity); the sequence is ASFASSRPSS. Coiled-coil stretches lie at residues 241 to 334 and 433 to 469; these read KESL…AEVA and IESK…TKCD.

Belongs to the NDC80/HEC1 family. In terms of assembly, component of the NDC80 complex, which consists of NDC80, NUF2, SPC24 and SPC25.

It is found in the chromosome. It localises to the centromere. Acts as a component of the essential kinetochore-associated NDC80 complex, which is required for chromosome segregation and spindle checkpoint activity to ensure proper cell division. The sequence is that of Kinetochore protein NDC80 homolog from Arabidopsis thaliana (Mouse-ear cress).